The chain runs to 498 residues: MTTKKLYFLSISIIILVAISIAIYITLNSNTKTRLTNDSQQQIDTIIEHDLQKGHIPGASILIVKNGKVFLNKGYGYQDVDKKVKASPTTKYEIASNTKAFTGLAILKLAQEGRLNLNDAVSKHVPHFKMNYNGQNETITIKQLLAQTSGIPSDITSEDSVTSKNNRLNDVTHAIMGDELHHKPGEEFEYSNMNYDLLGLIIQNVTKQSYTKYITNSWLKPLHMTHTSFKQTNYKSKHDAIGYELQGSTPVVSKPEFNLWDTPSAYMMTSTEDLEHWIKFQLNPPDKYKSLVQQSHKNLSSTIGEPNANAYASGWFTNNDEHLVFHSGTLDNFSSFILLNPKQNYGIVVLANLNSEYVPKLVEHLNTQIVNHKRYSTVASMLNQYKDQFNIVTVLMTTLILLAFIFSAYRAWQMRHGQILLRRSKRIAVLSWLSLCICIALALILYALPYLILGSNNWSFVLTWLPIEIKLALITTLIALFSTLIVILLFLHTKITKT.

4 consecutive transmembrane segments (helical) span residues 6 to 26, 389 to 409, 433 to 453, and 471 to 491; these read LYFL…IYIT, FNIV…FSAY, LSLC…YLIL, and LALI…LLFL.

It is found in the cell membrane. In terms of biological role, its precise function is unknown. Has no penicillin-binding activity and is not involved in methicillin resistance. The polypeptide is Protein flp (flp) (Staphylococcus aureus (strain NCTC 8325 / PS 47)).